Reading from the N-terminus, the 269-residue chain is Protein BASIC PENTACYSTEINE3 (269 aa).

It belongs to the BBR/BPC family. As to expression, expressed in seedlings, leaves and pistils. Detected in the base of flowers and tips of carpels, in petal vasculature, in anthers, in young rosette, in the lateral and primary roots, and in the gynobasal portion of the ovule.

Its subcellular location is the nucleus. In terms of biological role, transcriptional regulator that specifically binds to GA-rich elements (GAGA-repeats) present in regulatory sequences of genes involved in developmental processes. This Arabidopsis thaliana (Mouse-ear cress) protein is Protein BASIC PENTACYSTEINE3 (BPC3).